Consider the following 164-residue polypeptide: ATP synthase subunit b (164 aa).

Residues 6 to 26 (GELVGNFILVTGSVIVLLLLI) form a helical membrane-spanning segment.

It belongs to the ATPase B chain family. F-type ATPases have 2 components, F(1) - the catalytic core - and F(0) - the membrane proton channel. F(1) has five subunits: alpha(3), beta(3), gamma(1), delta(1), epsilon(1). F(0) has three main subunits: a(1), b(2) and c(10-14). The alpha and beta chains form an alternating ring which encloses part of the gamma chain. F(1) is attached to F(0) by a central stalk formed by the gamma and epsilon chains, while a peripheral stalk is formed by the delta and b chains.

The protein resides in the cell membrane. Its function is as follows. F(1)F(0) ATP synthase produces ATP from ADP in the presence of a proton or sodium gradient. F-type ATPases consist of two structural domains, F(1) containing the extramembraneous catalytic core and F(0) containing the membrane proton channel, linked together by a central stalk and a peripheral stalk. During catalysis, ATP synthesis in the catalytic domain of F(1) is coupled via a rotary mechanism of the central stalk subunits to proton translocation. In terms of biological role, component of the F(0) channel, it forms part of the peripheral stalk, linking F(1) to F(0). The chain is ATP synthase subunit b from Streptococcus pyogenes serotype M12 (strain MGAS2096).